A 557-amino-acid polypeptide reads, in one-letter code: Potassium-transporting ATPase potassium-binding subunit (557 aa).

The next 10 membrane-spanning stretches (helical) occupy residues 1–21 (MEIL…IPIG), 62–82 (QYIF…YIIL), 132–152 (IVIT…ALAF), 176–196 (ILLP…VPQT), 253–273 (VQII…GHMI), 279–299 (AVAI…ICFS), 371–391 (IFGG…LTVF), 415–435 (LVAF…ALAL), 482–502 (VSAG…LLAV), and 528–548 (VTLI…AVAL).

The protein belongs to the KdpA family. In terms of assembly, the system is composed of three essential subunits: KdpA, KdpB and KdpC.

Its subcellular location is the cell membrane. Its function is as follows. Part of the high-affinity ATP-driven potassium transport (or Kdp) system, which catalyzes the hydrolysis of ATP coupled with the electrogenic transport of potassium into the cytoplasm. This subunit binds the extracellular potassium ions and delivers the ions to the membrane domain of KdpB through an intramembrane tunnel. In Clostridium acetobutylicum (strain ATCC 824 / DSM 792 / JCM 1419 / IAM 19013 / LMG 5710 / NBRC 13948 / NRRL B-527 / VKM B-1787 / 2291 / W), this protein is Potassium-transporting ATPase potassium-binding subunit.